We begin with the raw amino-acid sequence, 561 residues long: Endoplasmic reticulum oxidoreductin-1 (561 aa).

Residues 1-18 (MVKVLQLCFLSAISLVQA) form the signal peptide. 2 N-linked (GlcNAc...) asparagine glycosylation sites follow: asparagine 20 and asparagine 39. Intrachain disulfides connect cysteine 95-cysteine 349, cysteine 105-cysteine 110, cysteine 145-cysteine 166, cysteine 152-cysteine 295, and cysteine 352-cysteine 355. An N-linked (GlcNAc...) asparagine glycan is attached at asparagine 135. FAD is bound by residues arginine 187, threonine 189, tryptophan 200, serine 228, histidine 231, and arginine 260. Residue asparagine 342 is glycosylated (N-linked (GlcNAc...) asparagine). Residue cysteine 352 is the Nucleophile of the active site. The active site involves cysteine 355. N-linked (GlcNAc...) asparagine glycosylation occurs at asparagine 452.

It belongs to the EROs family. In terms of assembly, may function both as a monomer and a homodimer. Requires FAD as cofactor.

The protein resides in the endoplasmic reticulum membrane. Essential oxidoreductase that oxidizes proteins in the endoplasmic reticulum to produce disulfide bonds. Acts by oxidizing directly PDI1 isomerase through a direct disulfide exchange. Does not act as a direct oxidant of folding substrate, but relies on PDI1 to transfer oxidizing equivalent. Does not oxidize all pdi related proteins, suggesting that it can discriminate between PDI1 and related proteins. Its reoxidation probably involves electron transfer to molecular oxygen via FAD. Acts independently of glutathione. May be responsible for a significant proportion of reactive oxygen species (ROS) in the cell, thereby being a source of oxidative stress. In Kluyveromyces lactis (strain ATCC 8585 / CBS 2359 / DSM 70799 / NBRC 1267 / NRRL Y-1140 / WM37) (Yeast), this protein is Endoplasmic reticulum oxidoreductin-1 (ERO1).